A 573-amino-acid chain; its full sequence is Sulfite reductase [NADPH] hemoprotein beta-component (573 aa).

Cys-438, Cys-444, Cys-483, and Cys-487 together coordinate [4Fe-4S] cluster. Cys-487 contacts siroheme.

It belongs to the nitrite and sulfite reductase 4Fe-4S domain family. As to quaternary structure, alpha(8)-beta(8). The alpha component is a flavoprotein, the beta component is a hemoprotein. Siroheme is required as a cofactor. It depends on [4Fe-4S] cluster as a cofactor.

It catalyses the reaction hydrogen sulfide + 3 NADP(+) + 3 H2O = sulfite + 3 NADPH + 4 H(+). Its pathway is sulfur metabolism; hydrogen sulfide biosynthesis; hydrogen sulfide from sulfite (NADPH route): step 1/1. In terms of biological role, component of the sulfite reductase complex that catalyzes the 6-electron reduction of sulfite to sulfide. This is one of several activities required for the biosynthesis of L-cysteine from sulfate. The sequence is that of Sulfite reductase [NADPH] hemoprotein beta-component from Geobacillus thermodenitrificans (strain NG80-2).